The primary structure comprises 352 residues: Rhodopsin, freshwater form (352 aa).

The Extracellular portion of the chain corresponds to 1–36; that stretch reads MNGTEGPNFYVPMSNVTGVVRSPFEYPQYYLAEPWA. N-linked (GlcNAc...) asparagine glycosylation is found at N2 and N15. Residues 37 to 61 traverse the membrane as a helical segment; the sequence is YSALAAYMFFLIIAGFPINFLTLYV. Residues 62–73 lie on the Cytoplasmic side of the membrane; that stretch reads TIEHKKLRTPLN. The helical transmembrane segment at 74–98 threads the bilayer; sequence YILLNLAVADLFMVFGGFTTTMYTS. Topologically, residues 99–113 are extracellular; that stretch reads MHGYFVFGPTGCNIE. Residues C110 and C187 are joined by a disulfide bond. The chain crosses the membrane as a helical span at residues 114–133; that stretch reads GFFATLGGEIALWCLVVLAV. At 134–152 the chain is on the cytoplasmic side; sequence ERWMVVCKPMSNFRFGENH. Residues 153 to 176 traverse the membrane as a helical segment; that stretch reads AIMGVAFTWVMALACAAPPLFGWS. The Extracellular portion of the chain corresponds to 177–202; it reads RYIPEGMQCSCGMDHYAPNPETYNES. Residue N200 is glycosylated (N-linked (GlcNAc...) asparagine). A helical membrane pass occupies residues 203 to 230; sequence FVIYMFICHFTIPLTVISFCYGRLVCTV. Topologically, residues 231–252 are cytoplasmic; it reads KEATAQQQESETTQRAEREVTR. A helical membrane pass occupies residues 253–276; sequence MVIIMVISFLVCWVPYASVAWYIF. Over 277-284 the chain is Extracellular; sequence THQGSSFG. Residues 285–309 traverse the membrane as a helical segment; sequence PIFMTIPAFFAKSSSLYNPLIYICM. The residue at position 296 (K296) is an N6-(retinylidene)lysine. The Cytoplasmic segment spans residues 310–352; it reads NKQSRNCMITTLCCGKNPFEEEEGASTTASKTEASSVSSVSPA. C323 carries the S-palmitoyl cysteine lipid modification. The segment at 330 to 352 is disordered; the sequence is EEEGASTTASKTEASSVSSVSPA. Over residues 334 to 352 the composition is skewed to low complexity; sequence ASTTASKTEASSVSSVSPA.

Belongs to the G-protein coupled receptor 1 family. Opsin subfamily. In terms of processing, phosphorylated on some or all of the serine and threonine residues present in the C-terminal region. As to expression, rod shaped photoreceptor cells which mediates vision in dim light.

The protein resides in the membrane. In terms of biological role, visual pigments such as rhodopsin and porphyropsin are light-absorbing molecules that mediate vision. Rhodopsin consists of an apoprotein, opsin, covalently linked to 11-cis-retinal. This receptor is coupled to the activation of phospholipase C. Porphyropsin consists of opsin covalently linked to 11-cis 3,4-didehydroretinal. This chain is Rhodopsin, freshwater form, found in Anguilla anguilla (European freshwater eel).